The chain runs to 224 residues: uncharacterized protein (224 aa).

This is an uncharacterized protein from Acanthamoeba polyphaga mimivirus (APMV).